Consider the following 117-residue polypeptide: G antigen 12J (117 aa).

Positions 1–117 (MSWRGRSTYY…PEEGEKQSQC (117 aa)) are disordered. Composition is skewed to acidic residues over residues 32–45 (FSDE…EEGE) and 87–96 (ECEDGPDGQE). A compositionally biased stretch (basic and acidic residues) spans 103 to 117 (EEVKTPEEGEKQSQC).

Belongs to the GAGE family.

The sequence is that of G antigen 12J (GAGE12J) from Homo sapiens (Human).